A 188-amino-acid chain; its full sequence is SRP-independent targeting protein 3 (188 aa).

The helical transmembrane segment at 27-47 threads the bilayer; it reads TIIMYIRILYCSSIGISWIIY. Ser-157 is modified (phosphoserine). The disordered stretch occupies residues 157–188; that stretch reads SLFGGMGQTGPKTDKKSIEEAERAGNAGVKAE. The span at 168–179 shows a compositional bias: basic and acidic residues; the sequence is KTDKKSIEEAER.

The protein belongs to the PHO88 family. As to quaternary structure, interacts with ENV10/SND2. ENV10/SND2 and PHO88/SND3 form a complex with the translocon in the endoplasmic reticulum membrane.

It is found in the endoplasmic reticulum membrane. Its subcellular location is the mitochondrion. Functionally, functions in the SND pathway, a SRP (signal recognition particle) and GET (guided entry of tail-anchored proteins) independent pathway for targeting a broad range of substrate proteins to the endoplasmic reticulum. SND functions in parallel to GET in targeting proteins with downstream hydrophobic motifs. Involved in inorganic phosphate uptake. Also involved in telomere length regulation and maintenance. This chain is SRP-independent targeting protein 3, found in Saccharomyces cerevisiae (strain ATCC 204508 / S288c) (Baker's yeast).